The primary structure comprises 778 residues: Tastin (778 aa).

Over residues 1-11 (MTTRQATKDPL) the composition is skewed to basic and acidic residues. Positions 1–115 (MTTRQATKDP…PGPPAQTEAP (115 aa)) are disordered. Phosphoserine is present on residues Ser-16, Ser-98, and Ser-170. Residues 212–244 (ISPSGPSFHPSTRPSFQELRRETAGSSRTSVSQ) are disordered. Over residues 235–244 (AGSSRTSVSQ) the composition is skewed to polar residues. Phosphoserine occurs at positions 324, 334, 344, and 362. Thr-363 carries the phosphothreonine modification. Ser-376 is subject to Phosphoserine. Disordered regions lie at residues 406-425 (EGSGKPPVATPSGPHSNRTP), 508-587 (ECGE…AEPR), and 600-641 (PESS…RVEL). The span at 513–523 (QPCPPAEPGPP) shows a compositional bias: pro residues. Tandem repeats lie at residues 516–548 (PPAEPGPPEAFCRSEPEIPEPSLQEQLEVPEPY), 549–581 (PPAEPRPLESCCRSEPEIPESSRQEQLEVPEPC), 582–614 (PPAEPRPLESYCRIEPEIPESSRQEQLEVPEPC), and 615–647 (PPAEPGPLQPSTQGQSGPPGPCPRVELGASEPC). Residues 516 to 647 (PPAEPGPPEA…RVELGASEPC (132 aa)) are 4 X 33 AA approximate tandem repeats. Over residues 560–574 (CRSEPEIPESSRQEQ) the composition is skewed to basic and acidic residues. Pro residues predominate over residues 612 to 622 (EPCPPAEPGPL).

In terms of assembly, directly binds bystin, and indirectly trophinin. As to expression, strong expression at implantation sites. Was exclusively localized to the apical side of the syncytiotrophoblast. Also found in macrophages.

It localises to the cytoplasm. Could be involved with bystin and trophinin in a cell adhesion molecule complex that mediates an initial attachment of the blastocyst to uterine epithelial cells at the time of the embryo implantation. The sequence is that of Tastin (TROAP) from Homo sapiens (Human).